The following is a 157-amino-acid chain: Transcription elongation factor GreA (157 aa).

Positions 1–24 (MDKFPMTPEGYHALDEELKRRQQE) are disordered. Residues 12–24 (HALDEELKRRQQE) show a composition bias toward basic and acidic residues. Positions 53 to 73 (EAQSLNEGRIAELEDKLSRAE) form a coiled coil.

It belongs to the GreA/GreB family.

Its function is as follows. Necessary for efficient RNA polymerase transcription elongation past template-encoded arresting sites. The arresting sites in DNA have the property of trapping a certain fraction of elongating RNA polymerases that pass through, resulting in locked ternary complexes. Cleavage of the nascent transcript by cleavage factors such as GreA or GreB allows the resumption of elongation from the new 3'terminus. GreA releases sequences of 2 to 3 nucleotides. The sequence is that of Transcription elongation factor GreA from Beijerinckia indica subsp. indica (strain ATCC 9039 / DSM 1715 / NCIMB 8712).